An 80-amino-acid chain; its full sequence is Clavanin-D (80 aa).

An N-terminal signal peptide occupies residues 1-19 (MKTTILILLILGLGINAKS). Positions 20–29 (LEERKSEEEK) are excised as a propeptide. At Phe52 the chain carries Phenylalanine amide. A propeptide spanning residues 54–80 (DDQQDNGKFYGHYAEDNGKHWYDTGDQ) is cleaved from the precursor.

Hemocytes and pharyngeal tissues.

Its subcellular location is the secreted. Its function is as follows. Has antimicrobial activity against E.coli, L.monocytogenes and C.albicans. The polypeptide is Clavanin-D (Styela clava (Sea squirt)).